Reading from the N-terminus, the 612-residue chain is Methionine--tRNA ligase (612 aa).

Positions proline 12–histidine 22 match the 'HIGH' region motif. Zn(2+)-binding residues include cysteine 144, cysteine 147, cysteine 157, and cysteine 160. The 'KMSKS' region motif lies at lysine 350 to serine 354. ATP is bound at residue serine 353. The interval isoleucine 580–lysine 612 is disordered.

Belongs to the class-I aminoacyl-tRNA synthetase family. MetG type 1 subfamily. As to quaternary structure, monomer. The cofactor is Zn(2+).

It localises to the cytoplasm. It catalyses the reaction tRNA(Met) + L-methionine + ATP = L-methionyl-tRNA(Met) + AMP + diphosphate. Functionally, is required not only for elongation of protein synthesis but also for the initiation of all mRNA translation through initiator tRNA(fMet) aminoacylation. In Corynebacterium jeikeium (strain K411), this protein is Methionine--tRNA ligase.